The sequence spans 273 residues: Inactive endochitinase At2g43600 (273 aa).

Residues 1-22 (MTIKNVIFSLFILAILAETVFS) form the signal peptide. One can recognise a Chitin-binding type-1 domain in the interval 23 to 61 (QNCMDTSCPGLKECCSRWGFCGTKDEYCGFFCFSGPCNI). Intrachain disulfides connect Cys-25/Cys-37, Cys-30/Cys-43, Cys-36/Cys-50, and Cys-54/Cys-59. Residues 78 to 273 (GKIETVITSA…GVTPDQGLDC (196 aa)) are catalytic. The N-linked (GlcNAc...) asparagine glycan is linked to Asn-99.

It belongs to the glycosyl hydrolase 19 family. Chitinase class I subfamily.

The polypeptide is Inactive endochitinase At2g43600 (Arabidopsis thaliana (Mouse-ear cress)).